A 501-amino-acid chain; its full sequence is Protein anon-37Cs (501 aa).

It is found in the cytoplasm. Has a non-vital function. In Drosophila simulans (Fruit fly), this protein is Protein anon-37Cs (anon-37Cs).